We begin with the raw amino-acid sequence, 154 residues long: Protein X (154 aa).

The mitochondrial targeting sequence stretch occupies residues 68–117 (PCALRFTSARRMETTVNAHRNLPKVLHKRTLGLSAMSTTDLEAYFKDCVF).

Belongs to the orthohepadnavirus protein X family. In terms of assembly, may form homodimer. May interact with host CEBPA, CFLAR, CREB1, DDB1, E4F1, HBXIP, HSPD1/HSP60, NFKBIA, POLR2E and SMAD4. Interacts with host SMC5-SMC6 complex and induces its degradation. Interacts with host TRPC4AP; leading to prevent ubiquitination of TRPC4AP. Interacts with host PLSCR1; this interaction promotes ubiquitination and degradation of HBx and impairs HBx-mediated cell proliferation. In terms of processing, a fraction may be phosphorylated in insect cells and HepG2 cells, a human hepatoblastoma cell line. Phosphorylated in vitro by host protein kinase C or mitogen-activated protein kinase. N-acetylated in insect cells.

It localises to the host cytoplasm. Its subcellular location is the host nucleus. It is found in the host mitochondrion. Multifunctional protein that plays a role in silencing host antiviral defenses and promoting viral transcription. Does not seem to be essential for HBV infection. May be directly involved in development of cirrhosis and liver cancer (hepatocellular carcinoma). Most of cytosolic activities involve modulation of cytosolic calcium. The effect on apoptosis is controversial depending on the cell types in which the studies have been conducted. May induce apoptosis by localizing in mitochondria and causing loss of mitochondrial membrane potential. May also modulate apoptosis by binding host CFLAR, a key regulator of the death-inducing signaling complex (DISC). Promotes viral transcription by using the host E3 ubiquitin ligase DDB1 to target the SMC5-SMC6 complex to proteasomal degradation. This host complex would otherwise bind to viral episomal DNA, and prevents its transcription. Moderately stimulates transcription of many different viral and cellular transcription elements. Promoters and enhancers stimulated by HBx contain DNA binding sites for NF-kappa-B, AP-1, AP-2, c-EBP, ATF/CREB, or the calcium-activated factor NF-AT. This is Protein X from Hepatitis B virus genotype B1 subtype adw (isolate Japan/pJDW233/1988) (HBV-B).